A 502-amino-acid chain; its full sequence is 2,3-bisphosphoglycerate-independent phosphoglycerate mutase (502 aa).

Mn(2+)-binding residues include Asp-12 and Ser-62. Ser-62 serves as the catalytic Phosphoserine intermediate. Residues His-123, 152-153 (RD), Arg-183, Arg-189, 255-258 (RPDR), and Lys-329 contribute to the substrate site. Positions 394, 398, 435, 436, and 453 each coordinate Mn(2+).

The protein belongs to the BPG-independent phosphoglycerate mutase family. Monomer. Mn(2+) serves as cofactor.

It carries out the reaction (2R)-2-phosphoglycerate = (2R)-3-phosphoglycerate. It functions in the pathway carbohydrate degradation; glycolysis; pyruvate from D-glyceraldehyde 3-phosphate: step 3/5. Catalyzes the interconversion of 2-phosphoglycerate and 3-phosphoglycerate. The polypeptide is 2,3-bisphosphoglycerate-independent phosphoglycerate mutase (Malacoplasma penetrans (strain HF-2) (Mycoplasma penetrans)).